The sequence spans 673 residues: Probable potassium transport system protein Kup 1 (673 aa).

13 helical membrane passes run 14 to 34, 58 to 78, 101 to 121, 147 to 167, 175 to 195, 196 to 216, 220 to 240, 252 to 272, 294 to 314, 345 to 365, 374 to 394, 403 to 423, and 427 to 447; these read GAGF…SPLY, LSLI…WIAL, WLII…ALTP, LPIV…QRFG, FGPV…INLF, GDFS…LLSP, AGIF…ALYS, VSWP…AAWL, LIIF…QALI, LYIP…VVYF, AYGL…TVYL, VFVV…FAAS, and FLHG…VMAI.

This sequence belongs to the HAK/KUP transporter (TC 2.A.72) family.

The protein resides in the cell membrane. The enzyme catalyses K(+)(in) + H(+)(in) = K(+)(out) + H(+)(out). Its function is as follows. Transport of potassium into the cell. Likely operates as a K(+):H(+) symporter. This Lactococcus lactis subsp. cremoris (strain SK11) protein is Probable potassium transport system protein Kup 1.